Reading from the N-terminus, the 524-residue chain is 2,3-bisphosphoglycerate-independent phosphoglycerate mutase (524 aa).

The Mn(2+) site is built by Asp-13 and Ser-63. Ser-63 serves as the catalytic Phosphoserine intermediate. Substrate is bound by residues His-124, 154-155 (RD), Arg-186, Arg-192, 262-265 (RADR), and Lys-337. Residues Asp-404, His-408, Asp-445, His-446, and His-464 each coordinate Mn(2+).

The protein belongs to the BPG-independent phosphoglycerate mutase family. In terms of assembly, monomer. It depends on Mn(2+) as a cofactor.

It carries out the reaction (2R)-2-phosphoglycerate = (2R)-3-phosphoglycerate. It functions in the pathway carbohydrate degradation; glycolysis; pyruvate from D-glyceraldehyde 3-phosphate: step 3/5. Catalyzes the interconversion of 2-phosphoglycerate and 3-phosphoglycerate. In Thermomicrobium roseum (strain ATCC 27502 / DSM 5159 / P-2), this protein is 2,3-bisphosphoglycerate-independent phosphoglycerate mutase.